Reading from the N-terminus, the 134-residue chain is Small ribosomal subunit protein uS8 (134 aa).

Belongs to the universal ribosomal protein uS8 family. As to quaternary structure, part of the 30S ribosomal subunit. Contacts proteins S5 and S12.

In terms of biological role, one of the primary rRNA binding proteins, it binds directly to 16S rRNA central domain where it helps coordinate assembly of the platform of the 30S subunit. The protein is Small ribosomal subunit protein uS8 of Kosmotoga olearia (strain ATCC BAA-1733 / DSM 21960 / TBF 19.5.1).